The primary structure comprises 264 residues: Transmembrane protein 41A (264 aa).

Residues 1–17 form the signal peptide; it reads MHSLLGLLLVFAGSTFA. A run of 5 helical transmembrane segments spans residues 67 to 87, 90 to 110, 153 to 173, 175 to 195, and 219 to 239; these read VYVF…AIPG, FLNV…LCCV, LFFF…FLNL, APIL…GLIP, and WETA…GTLI. The interval 96-207 is VTT domain; it reads GALFGPWLGL…FICVQTGSIL (112 aa).

It belongs to the TMEM41 family.

It localises to the membrane. The chain is Transmembrane protein 41A (TMEM41A) from Bos taurus (Bovine).